Consider the following 88-residue polypeptide: DNA-directed RNA polymerase subunit omega (88 aa).

This sequence belongs to the RNA polymerase subunit omega family. In terms of assembly, the RNAP catalytic core consists of 2 alpha, 1 beta, 1 beta' and 1 omega subunit. When a sigma factor is associated with the core the holoenzyme is formed, which can initiate transcription.

The catalysed reaction is RNA(n) + a ribonucleoside 5'-triphosphate = RNA(n+1) + diphosphate. Promotes RNA polymerase assembly. Latches the N- and C-terminal regions of the beta' subunit thereby facilitating its interaction with the beta and alpha subunits. The sequence is that of DNA-directed RNA polymerase subunit omega from Salinispora tropica (strain ATCC BAA-916 / DSM 44818 / JCM 13857 / NBRC 105044 / CNB-440).